Here is a 238-residue protein sequence, read N- to C-terminus: B-box zinc finger protein 25 (238 aa).

The Zn(2+) site is built by cysteine 5, cysteine 8, cysteine 28, histidine 33, cysteine 57, cysteine 60, cysteine 80, and histidine 85. The segment at 5-47 (CDVCEKAPATLICCADEAALCAKCDVEVHAANKLASKHQRLFL) adopts a B box-type 1; atypical zinc-finger fold. The B box-type 2; atypical zinc-finger motif lies at 57–99 (CDICLEKAAFIFCVEDRALLCRDCDEATHAPNTRSANHQRFLA). Positions 115–139 (VEKNHFDPSNQQSLSKPPTQQPAAP) are disordered. The span at 121–137 (DPSNQQSLSKPPTQQPA) shows a compositional bias: polar residues. Positions 226 to 238 (DDEEEHFLVPDLG) are interaction with COP1.

Interacts with COP1 WD40 domain. Interacts with HY5 and HYH. In terms of processing, COP1-mediated ubiquitination and subsequent proteasomal degradation of BBX25/STH occurs in the dark.

It localises to the nucleus. Functionally, acts as a negative regulator of seedling photomorphogenesis. BBX25/STH and BBX24/STO function as transcriptional corepressors of HY5 activity, leading to the down-regulation of BBX22 expression. BBX25/STH acts additively with BBX24/STO during de-etiolation and the hypocotyl shade avoidance response. This chain is B-box zinc finger protein 25, found in Arabidopsis thaliana (Mouse-ear cress).